A 591-amino-acid chain; its full sequence is NADP-dependent malic enzyme (591 aa).

Tyr139 (proton donor) is an active-site residue. Arg192 contributes to the NAD(+) binding site. Lys210 serves as the catalytic Proton acceptor. 3 residues coordinate a divalent metal cation: Glu282, Asp283, and Asp306. Asp306 contacts NAD(+). 335 to 351 (LFLGAGEAGTGIAELIA) provides a ligand contact to NADP(+). Asn447 lines the NAD(+) pocket.

The protein belongs to the malic enzymes family. As to quaternary structure, homotetramer. Mg(2+) serves as cofactor. Mn(2+) is required as a cofactor.

Its subcellular location is the cytoplasm. The enzyme catalyses (S)-malate + NADP(+) = pyruvate + CO2 + NADPH. It catalyses the reaction oxaloacetate + H(+) = pyruvate + CO2. The polypeptide is NADP-dependent malic enzyme (Vitis vinifera (Grape)).